The chain runs to 121 residues: Small ribosomal subunit protein uS13 (121 aa).

The segment at 95 to 121 (LPVRGQNTKNNARTRKGKAVAIAGKKK) is disordered. The segment covering 106–121 (ARTRKGKAVAIAGKKK) has biased composition (basic residues).

This sequence belongs to the universal ribosomal protein uS13 family. In terms of assembly, part of the 30S ribosomal subunit. Forms a loose heterodimer with protein S19. Forms two bridges to the 50S subunit in the 70S ribosome.

Located at the top of the head of the 30S subunit, it contacts several helices of the 16S rRNA. In the 70S ribosome it contacts the 23S rRNA (bridge B1a) and protein L5 of the 50S subunit (bridge B1b), connecting the 2 subunits; these bridges are implicated in subunit movement. Contacts the tRNAs in the A and P-sites. The protein is Small ribosomal subunit protein uS13 of Streptococcus equi subsp. zooepidemicus (strain H70).